The primary structure comprises 1296 residues: Aggregation substance (1296 aa).

The signal sequence occupies residues 1-43 (MKQQTEVKKRFKMYKAKKHWVVAPILFIGVLGVVGLATDDVQA). 2 disordered regions span residues 48–188 (TQPG…KPAE) and 1221–1245 (HTPE…TPQA). The span at 89-99 (KVEEVASEKNG) shows a compositional bias: basic and acidic residues. 2 stretches are compositionally biased toward polar residues: residues 100–117 (AEQS…QQPT) and 125–138 (QEQP…TNEP). Positions 160 to 178 (KEFETPDVDKAVDEAKKDP) are enriched in basic and acidic residues. An LPXTG sorting signal motif is present at residues 1261-1265 (LPQTG). Position 1264 is a pentaglycyl murein peptidoglycan amidated threonine (Thr-1264). Residues 1265–1296 (GEKQNVLLTVAGSLAAMLGLAGLGFKRRKETK) constitute a propeptide, removed by sortase.

The protein belongs to the antigen I/II family.

The protein resides in the secreted. It is found in the cell wall. Aggregation substance allows donor and recipient strains to form tight aggregates which allow the non-motile bacteria to maintain physical contact over a period of time sufficient to permit conjugative transfer of the sex pheromone plasmid from donor to recipient strains. This Enterococcus faecalis (strain ATCC 700802 / V583) protein is Aggregation substance (asa1).